We begin with the raw amino-acid sequence, 674 residues long: Acetyl-coenzyme A synthetase (674 aa).

Residues 201–204 and Thr-320 each bind CoA; that span reads RGGR. ATP is bound by residues 396–398, 420–425, Asp-518, and Arg-533; these read GEP and DTYWQT. Ser-541 serves as a coordination point for CoA. Arg-544 lines the ATP pocket. Residue Arg-603 participates in CoA binding.

Belongs to the ATP-dependent AMP-binding enzyme family.

It carries out the reaction acetate + ATP + CoA = acetyl-CoA + AMP + diphosphate. In Dictyostelium discoideum (Social amoeba), this protein is Acetyl-coenzyme A synthetase (acsA).